The sequence spans 120 residues: Large ribosomal subunit protein eL18 (120 aa).

It belongs to the eukaryotic ribosomal protein eL18 family.

In Pyrococcus horikoshii (strain ATCC 700860 / DSM 12428 / JCM 9974 / NBRC 100139 / OT-3), this protein is Large ribosomal subunit protein eL18.